The primary structure comprises 94 residues: Large ribosomal subunit protein bL27 (94 aa).

Positions 1 to 9 are excised as a propeptide; the sequence is MLKLNLQFF.

Belongs to the bacterial ribosomal protein bL27 family. In terms of processing, the N-terminus is cleaved by ribosomal processing cysteine protease Prp.

This Staphylococcus haemolyticus (strain JCSC1435) protein is Large ribosomal subunit protein bL27.